The sequence spans 766 residues: 5-methyltetrahydropteroyltriglutamate--homocysteine methyltransferase (766 aa).

5-methyltetrahydropteroyltri-L-glutamate contacts are provided by residues 16 to 19 (RELK) and Lys119. Residues 440 to 442 (IGS) and Glu493 contribute to the L-homocysteine site. L-methionine contacts are provided by residues 440-442 (IGS) and Glu493. Residues 524-525 (RC) and Trp570 contribute to the 5-methyltetrahydropteroyltri-L-glutamate site. L-homocysteine is bound at residue Asp608. Asp608 is a binding site for L-methionine. Glu614 contacts 5-methyltetrahydropteroyltri-L-glutamate. Zn(2+) contacts are provided by His650, Cys652, and Glu674. His703 (proton donor) is an active-site residue. Cys735 serves as a coordination point for Zn(2+).

Belongs to the vitamin-B12 independent methionine synthase family. Zn(2+) is required as a cofactor.

The catalysed reaction is 5-methyltetrahydropteroyltri-L-glutamate + L-homocysteine = tetrahydropteroyltri-L-glutamate + L-methionine. It functions in the pathway amino-acid biosynthesis; L-methionine biosynthesis via de novo pathway; L-methionine from L-homocysteine (MetE route): step 1/1. In terms of biological role, catalyzes the transfer of a methyl group from 5-methyltetrahydrofolate to homocysteine resulting in methionine formation. The sequence is that of 5-methyltetrahydropteroyltriglutamate--homocysteine methyltransferase from Pseudomonas aeruginosa (strain UCBPP-PA14).